Reading from the N-terminus, the 136-residue chain is Class I hydrophobin 16 (136 aa).

Positions 1-19 (MKFTSVIALVATAATLVGA) are cleaved as a signal peptide. Cystine bridges form between Cys58–Cys115, Cys65–Cys109, Cys66–Cys99, and Cys116–Cys129. Asn74 is a glycosylation site (N-linked (GlcNAc...) asparagine).

It belongs to the fungal hydrophobin family. Self-assembles to form functional amyloid fibrils called rodlets. Self-assembly into fibrillar rodlets occurs spontaneously at hydrophobic:hydrophilic interfaces and the rodlets further associate laterally to form amphipathic monolayers.

Its subcellular location is the secreted. It localises to the cell wall. Its function is as follows. Aerial growth, conidiation, and dispersal of filamentous fungi in the environment rely upon a capability of their secreting small amphipathic proteins called hydrophobins (HPBs) with low sequence identity. Class I can self-assemble into an outermost layer of rodlet bundles on aerial cell surfaces, conferring cellular hydrophobicity that supports fungal growth, development and dispersal; whereas Class II form highly ordered films at water-air interfaces through intermolecular interactions but contribute nothing to the rodlet structure. Hydph16 is a class I hydrophobin that has specific functions in aerial mycelium formation, cell wall stress protection, and cell wall structure formation, but does not seem to be involved in mycelial hydrophobicity. Specifically functions in resisting cell wall synthesis inhibitors. This Pleurotus ostreatus (strain PC15) (Oyster mushroom) protein is Class I hydrophobin 16.